Reading from the N-terminus, the 349-residue chain is Hydroxymethylglutaryl-CoA synthase (349 aa).

Aspartate 30 serves as a coordination point for (3S)-3-hydroxy-3-methylglutaryl-CoA. The active-site Proton donor/acceptor is glutamate 82. Residue cysteine 114 coordinates (3S)-3-hydroxy-3-methylglutaryl-CoA. The active-site Acyl-thioester intermediate is the cysteine 114. Arginine 203 is a binding site for CoA. Residues threonine 205 and histidine 238 each contribute to the (3S)-3-hydroxy-3-methylglutaryl-CoA site. Histidine 238 (proton donor/acceptor) is an active-site residue. A CoA-binding site is contributed by lysine 243. 3 residues coordinate (3S)-3-hydroxy-3-methylglutaryl-CoA: lysine 247, asparagine 270, and serine 300.

This sequence belongs to the thiolase-like superfamily. Archaeal HMG-CoA synthase family. Interacts with acetoacetyl-CoA thiolase that catalyzes the precedent step in the pathway and with a DUF35 protein. The acetoacetyl-CoA thiolase/HMG-CoA synthase complex channels the intermediate via a fused CoA-binding site, which allows for efficient coupling of the endergonic thiolase reaction with the exergonic HMGCS reaction.

The enzyme catalyses acetoacetyl-CoA + acetyl-CoA + H2O = (3S)-3-hydroxy-3-methylglutaryl-CoA + CoA + H(+). It functions in the pathway metabolic intermediate biosynthesis; (R)-mevalonate biosynthesis; (R)-mevalonate from acetyl-CoA: step 2/3. Functionally, catalyzes the condensation of acetyl-CoA with acetoacetyl-CoA to form 3-hydroxy-3-methylglutaryl-CoA (HMG-CoA). Functions in the mevalonate (MVA) pathway leading to isopentenyl diphosphate (IPP), a key precursor for the biosynthesis of isoprenoid compounds that are building blocks of archaeal membrane lipids. This is Hydroxymethylglutaryl-CoA synthase from Methanothermococcus thermolithotrophicus (Methanococcus thermolithotrophicus).